The following is a 312-amino-acid chain: Tetraacyldisaccharide 4'-kinase (312 aa).

60-67 (IAGGSGKT) is an ATP binding site.

The protein belongs to the LpxK family.

It carries out the reaction a lipid A disaccharide + ATP = a lipid IVA + ADP + H(+). Its pathway is glycolipid biosynthesis; lipid IV(A) biosynthesis; lipid IV(A) from (3R)-3-hydroxytetradecanoyl-[acyl-carrier-protein] and UDP-N-acetyl-alpha-D-glucosamine: step 6/6. Transfers the gamma-phosphate of ATP to the 4'-position of a tetraacyldisaccharide 1-phosphate intermediate (termed DS-1-P) to form tetraacyldisaccharide 1,4'-bis-phosphate (lipid IVA). The polypeptide is Tetraacyldisaccharide 4'-kinase (Helicobacter pylori (strain ATCC 700392 / 26695) (Campylobacter pylori)).